A 326-amino-acid polypeptide reads, in one-letter code: Putative ankyrin repeat protein L25 (326 aa).

ANK repeat units follow at residues 11–40 (RSEY…DLNV), 42–65 (KLFY…NIHV), 66–95 (DDEF…DIHV), 96–125 (NDDA…DIHA), 127–154 (NELV…DIHA), 155–184 (EDDE…NFRA), 185–214 (ENDY…DIHA), 216–244 (DEYA…DIHA), 246–274 (NDYG…NIHA), and 275–304 (KDDY…NIHA).

The polypeptide is Putative ankyrin repeat protein L25 (Acanthamoeba polyphaga mimivirus (APMV)).